We begin with the raw amino-acid sequence, 520 residues long: Ribonuclease Y (520 aa).

Residues 3–23 (IEIQWIGIGAAFLVGAIGGAL) traverse the membrane as a helical segment. A KH domain is found at 210–273 (AVSVVPLPND…EVARLALERL (64 aa)). Positions 336 to 429 (VLQHSIEVAF…VQAADALSGA (94 aa)) constitute an HD domain.

Belongs to the RNase Y family.

The protein resides in the cell membrane. Its function is as follows. Endoribonuclease that initiates mRNA decay. This chain is Ribonuclease Y, found in Syntrophotalea carbinolica (strain DSM 2380 / NBRC 103641 / GraBd1) (Pelobacter carbinolicus).